The chain runs to 123 residues: Small ribosomal subunit protein uS12cz/uS12cy (123 aa).

The protein belongs to the universal ribosomal protein uS12 family. Part of the 30S ribosomal subunit.

It localises to the plastid. It is found in the chloroplast. Its function is as follows. With S4 and S5 plays an important role in translational accuracy. Located at the interface of the 30S and 50S subunits. The protein is Small ribosomal subunit protein uS12cz/uS12cy (rps12-A) of Gossypium hirsutum (Upland cotton).